The primary structure comprises 974 residues: Coiled-coil domain-containing protein 146 (974 aa).

Residues 1–44 are disordered; it reads MEDRSKYIAEESEDEEDEEQEEKEKKGGASTSTETEEDQEDIPS. Residues 10–21 show a composition bias toward acidic residues; the sequence is EESEDEEDEEQE. A Phosphoserine modification is found at Ser12. 6 coiled-coil regions span residues 105–160, 195–340, 421–474, 512–660, 687–712, and 767–848; these read VQLL…QERE, KLLK…TKEN, LPEQ…REVL, KKLE…NESG, QDIEIHILEEKIRFLKLKVAEKQRQI, and LTEE…ELSM.

In terms of assembly, interacts with CCDC38 and CCDC42. Interacts with intraflagellar transport proteins IFT20 and IFT88.

It is found in the cytoplasm. Its subcellular location is the cytoskeleton. The protein localises to the microtubule organizing center. It localises to the centrosome. The protein resides in the centriole. It is found in the cell projection. Its subcellular location is the cilium. The protein localises to the flagellum. It localises to the flagellum axoneme. The protein resides in the cilium basal body. It is found in the midbody. Functionally, essential for sperm flagellum biogenesis and male fertility. In Rattus norvegicus (Rat), this protein is Coiled-coil domain-containing protein 146 (Ccdc146).